The following is a 251-amino-acid chain: Sugar fermentation stimulation protein homolog (251 aa).

This sequence belongs to the SfsA family.

In Prochlorococcus marinus (strain MIT 9313), this protein is Sugar fermentation stimulation protein homolog.